Consider the following 467-residue polypeptide: Cysteine--tRNA ligase (467 aa).

Cys28 is a binding site for Zn(2+). Positions 30 to 40 (ITAYDYSHIGH) match the 'HIGH' region motif. Zn(2+)-binding residues include Cys211, His236, and Glu240. A 'KMSKS' region motif is present at residues 268-272 (KMSKS). ATP is bound at residue Lys271.

The protein belongs to the class-I aminoacyl-tRNA synthetase family. Requires Zn(2+) as cofactor.

It is found in the cytoplasm. It catalyses the reaction tRNA(Cys) + L-cysteine + ATP = L-cysteinyl-tRNA(Cys) + AMP + diphosphate. The protein is Cysteine--tRNA ligase (cysS) of Archaeoglobus fulgidus (strain ATCC 49558 / DSM 4304 / JCM 9628 / NBRC 100126 / VC-16).